We begin with the raw amino-acid sequence, 445 residues long: RNA-binding protein asd-2 (445 aa).

Positions 22–63 (TVIPPPPNDSGHEFIGPSSGPPQVTITPSGVQSGSANGVSTS) are disordered. The segment covering 42-63 (PPQVTITPSGVQSGSANGVSTS) has biased composition (polar residues). The qua1 domain stretch occupies residues 71 to 128 (EYLSQLLKDKKQLAAFPNVFHHLERLADEEINKVRVVLFQCEFSKESAPLPDAEGDST). The 27-residue stretch at 145-171 (NFVGRILGPRGMTAKQLEQETGCKIMV) folds into the KH domain. The tract at residues 230–253 (APEGEDDLKRKQLMELAIINGTYR) is qua2 domain; involved in RNA binding.

As to quaternary structure, interacts with sup-12; in the presence of RNA, but with weak affinity in the absence of RNA. In terms of tissue distribution, isoform b: Expressed in the hypodermis and pharyngeal muscles. Isoform c: Expressed in body wall muscles and phayngeal muscles.

Its subcellular location is the nucleus. RNA-binding protein that binds to the 5'-NACUAAY-N(1,20)-UAAY-3' consensus sequence in pre-mRNA introns to promote alternative splicing. Required for mutually exclusive alternative splicing where it modulates the switch between mutually exclusive exons during pre-mRNA maturation. Involved in muscle-specific gene expression regulating the alternative splicing of genes such as let-2 and unc-60 to ensure that their respective isoforms are expressed in muscle. Promotes the removal of intron 10 from let-2 pre-mRNA to allow for the exclusive expression of the muscle-specific let-2 isoform (as opposed to the non-muscle-specific isoform expressed in embryos) in body wall muscles during late larval and adult stages of development. Binds cooperatively with RNA-binding protein sup-12 to intron 1A of the unc-60 pre-mRNA to promote alternative splicing and expression of the muscle specific isoform of unc-60. The chain is RNA-binding protein asd-2 from Caenorhabditis elegans.